The chain runs to 524 residues: Alkaline phosphatase, tissue-nonspecific isozyme (524 aa).

An N-terminal signal peptide occupies residues 1–17 (MISPFLVLAIGTCLTNS). Aspartate 60 is a Mg(2+) binding site. Zn(2+)-binding residues include aspartate 60 and serine 110. Serine 110 serves as the catalytic Phosphoserine intermediate. Serine 110 bears the Phosphoserine mark. Cysteine 139 and cysteine 201 are joined by a disulfide. Asparagine 140 carries an N-linked (GlcNAc...) asparagine glycan. Threonine 173 lines the Mg(2+) pocket. A glycan (N-linked (GlcNAc...) asparagine) is linked at asparagine 230. Glutamate 235 is a binding site for Ca(2+). Asparagine 271 carries an N-linked (GlcNAc...) asparagine glycan. Residues phenylalanine 290 and glutamate 291 each coordinate Ca(2+). N-linked (GlcNAc...) asparagine glycosylation occurs at asparagine 303. Aspartate 306 contacts Ca(2+). Glutamate 332 provides a ligand contact to Mg(2+). Positions 337, 341, 378, and 379 each coordinate Zn(2+). Asparagine 430 is a glycosylation site (N-linked (GlcNAc...) asparagine). A Zn(2+)-binding site is contributed by histidine 454. A disulfide bridge connects residues cysteine 489 and cysteine 497. A lipid anchor (GPI-anchor amidated serine) is attached at serine 501. Positions 502–524 (SAGSLAAGPLLLALALYPLSVLF) are cleaved as a propeptide — removed in mature form.

Belongs to the alkaline phosphatase family. As to quaternary structure, homodimer. Mg(2+) serves as cofactor. It depends on Zn(2+) as a cofactor. The cofactor is Ca(2+). In terms of processing, N-glycosylated.

It localises to the cell membrane. It is found in the extracellular vesicle membrane. The protein resides in the mitochondrion membrane. Its subcellular location is the mitochondrion intermembrane space. The catalysed reaction is a phosphate monoester + H2O = an alcohol + phosphate. It catalyses the reaction diphosphate + H2O = 2 phosphate + H(+). The enzyme catalyses pyridoxal 5'-phosphate + H2O = pyridoxal + phosphate. It carries out the reaction phosphoethanolamine + H2O = ethanolamine + phosphate. The catalysed reaction is N-phosphocreatine + H2O = creatine + phosphate. It catalyses the reaction ATP + H2O = ADP + phosphate + H(+). The enzyme catalyses ADP + H2O = AMP + phosphate + H(+). It carries out the reaction AMP + H2O = adenosine + phosphate. Its activity is regulated as follows. Phosphatase activity is specifically inhibited by 5-((5-chloro-2-methoxyphenyl)sulfonamido)nicotinamide (SBI-425). Functionally, alkaline phosphatase that metabolizes various phosphate compounds and plays a key role in skeletal mineralization and adaptive thermogenesis. Has broad substrate specificity and can hydrolyze a considerable variety of compounds: however, only a few substrates, such as diphosphate (inorganic pyrophosphate; PPi), pyridoxal 5'-phosphate (PLP) and N-phosphocreatine are natural substrates. Plays an essential role in skeletal and dental mineralization via its ability to hydrolyze extracellular diphosphate, a potent mineralization inhibitor, to phosphate: it thereby promotes hydroxyapatite crystal formation and increases inorganic phosphate concentration. Acts in a non-redundant manner with PHOSPHO1 in skeletal mineralization: while PHOSPHO1 mediates the initiation of hydroxyapatite crystallization in the matrix vesicles (MVs), ALPL/TNAP catalyzes the spread of hydroxyapatite crystallization in the extracellular matrix. Also promotes dephosphorylation of osteopontin (SSP1), an inhibitor of hydroxyapatite crystallization in its phosphorylated state; it is however unclear whether ALPL/TNAP mediates SSP1 dephosphorylation via a direct or indirect manner. Catalyzes dephosphorylation of PLP to pyridoxal (PL), the transportable form of vitamin B6, in order to provide a sufficient amount of PLP in the brain, an essential cofactor for enzymes catalyzing the synthesis of diverse neurotransmitters. Additionally, also able to mediate ATP degradation in a stepwise manner to adenosine, thereby regulating the availability of ligands for purinergic receptors. Also capable of dephosphorylating microbial products, such as lipopolysaccharides (LPS) as well as other phosphorylated small-molecules, such as poly-inosine:cytosine (poly I:C). Acts as a key regulator of adaptive thermogenesis as part of the futile creatine cycle: localizes to the mitochondria of thermogenic fat cells and acts by mediating hydrolysis of N-phosphocreatine to initiate a futile cycle of creatine dephosphorylation and phosphorylation. During the futile creatine cycle, creatine and N-phosphocreatine are in a futile cycle, which dissipates the high energy charge of N-phosphocreatine as heat without performing any mechanical or chemical work. The protein is Alkaline phosphatase, tissue-nonspecific isozyme of Homo sapiens (Human).